We begin with the raw amino-acid sequence, 144 residues long: Protein cornichon (144 aa).

Over 1 to 10 (MAFNFTAFTY) the chain is Lumenal. The interval 1-57 (MAFNFTAFTYIVALIGDAFLIFFAIFHVIAFDELKTDYKNPIDQCNSLNPLVLPEYL) is interaction with grk. Residues 11–31 (IVALIGDAFLIFFAIFHVIAF) form a helical membrane-spanning segment. Residues 32–56 (DELKTDYKNPIDQCNSLNPLVLPEY) lie on the Cytoplasmic side of the membrane. Residues 57-77 (LLHLFLNLLFLFCGEWYSLCL) form a helical membrane-spanning segment. Topologically, residues 78-122 (NIPLIAYHIWRYKNRPLMSGPGLYDPTTVLKTDTLSRNLREGWIK) are lumenal. A helical membrane pass occupies residues 123–143 (LAVYLISFFYYIYGMVYSLIS). Position 144 (Thr-144) is a topological domain, cytoplasmic.

Belongs to the cornichon family. As to quaternary structure, interacts with grk.

The protein localises to the endoplasmic reticulum membrane. Functionally, acts as a cargo receptor necessary for the transportation of gurken (grk) to a transitional endoplasmic reticulum (tER) site and promotes its incorporation into coat protein complex II (COPII) vesicles. Associated with gurken, produces a signal received by torpedo resulting in a signaling pathway that first establishes posterior follicle cell fates and normal localization of the anterior and posterior determinants, later they act in a signaling event inducing dorsal follicle cell fates and regulating the dorsal-ventral pattern of egg and embryo. The sequence is that of Protein cornichon (cni) from Drosophila virilis (Fruit fly).